The primary structure comprises 1210 residues: uncharacterized protein (1210 aa).

It to E.coli molybdate metabolism regulator (MolR).

This is an uncharacterized protein from Escherichia coli (strain K12).